The chain runs to 469 residues: ATP synthase subunit beta (469 aa).

156–163 (GGAGVGKT) serves as a coordination point for ATP.

It belongs to the ATPase alpha/beta chains family. F-type ATPases have 2 components, CF(1) - the catalytic core - and CF(0) - the membrane proton channel. CF(1) has five subunits: alpha(3), beta(3), gamma(1), delta(1), epsilon(1). CF(0) has three main subunits: a(1), b(2) and c(9-12). The alpha and beta chains form an alternating ring which encloses part of the gamma chain. CF(1) is attached to CF(0) by a central stalk formed by the gamma and epsilon chains, while a peripheral stalk is formed by the delta and b chains.

The protein resides in the cell membrane. The enzyme catalyses ATP + H2O + 4 H(+)(in) = ADP + phosphate + 5 H(+)(out). Functionally, produces ATP from ADP in the presence of a proton gradient across the membrane. The catalytic sites are hosted primarily by the beta subunits. The protein is ATP synthase subunit beta of Lactococcus lactis subsp. cremoris (strain MG1363).